The following is a 405-amino-acid chain: L-cysteine:1D-myo-inositol 2-amino-2-deoxy-alpha-D-glucopyranoside ligase (405 aa).

Position 43 (C43) interacts with Zn(2+). L-cysteinyl-5'-AMP-binding positions include 43 to 46 (CGIT), T58, and 81 to 83 (NIT). The 'HIGH' region signature appears at 45–55 (ITPYDATHLGH). Residues 187 to 192 (ERGGDP) carry the 'ERGGDP' region motif. W227 is an L-cysteinyl-5'-AMP binding site. Position 231 (C231) interacts with Zn(2+). 249–251 (GSD) contributes to the L-cysteinyl-5'-AMP binding site. H256 contacts Zn(2+). Residue I283 coordinates L-cysteinyl-5'-AMP. A 'KMSKS' region motif is present at residues 289–293 (KMSKS).

This sequence belongs to the class-I aminoacyl-tRNA synthetase family. MshC subfamily. Monomer. Zn(2+) is required as a cofactor.

The catalysed reaction is 1D-myo-inositol 2-amino-2-deoxy-alpha-D-glucopyranoside + L-cysteine + ATP = 1D-myo-inositol 2-(L-cysteinylamino)-2-deoxy-alpha-D-glucopyranoside + AMP + diphosphate + H(+). Its function is as follows. Catalyzes the ATP-dependent condensation of GlcN-Ins and L-cysteine to form L-Cys-GlcN-Ins. The polypeptide is L-cysteine:1D-myo-inositol 2-amino-2-deoxy-alpha-D-glucopyranoside ligase (Nakamurella multipartita (strain ATCC 700099 / DSM 44233 / CIP 104796 / JCM 9543 / NBRC 105858 / Y-104) (Microsphaera multipartita)).